We begin with the raw amino-acid sequence, 274 residues long: 4-diphosphocytidyl-2-C-methyl-D-erythritol kinase (274 aa).

The active site involves Lys8. An ATP-binding site is contributed by 94 to 104; the sequence is PSGAGLGGGSA. Asp136 is a catalytic residue.

Belongs to the GHMP kinase family. IspE subfamily.

It catalyses the reaction 4-CDP-2-C-methyl-D-erythritol + ATP = 4-CDP-2-C-methyl-D-erythritol 2-phosphate + ADP + H(+). It participates in isoprenoid biosynthesis; isopentenyl diphosphate biosynthesis via DXP pathway; isopentenyl diphosphate from 1-deoxy-D-xylulose 5-phosphate: step 3/6. In terms of biological role, catalyzes the phosphorylation of the position 2 hydroxy group of 4-diphosphocytidyl-2C-methyl-D-erythritol. This is 4-diphosphocytidyl-2-C-methyl-D-erythritol kinase from Bacteroides fragilis (strain ATCC 25285 / DSM 2151 / CCUG 4856 / JCM 11019 / LMG 10263 / NCTC 9343 / Onslow / VPI 2553 / EN-2).